The sequence spans 367 residues: tRNA-specific 2-thiouridylase MnmA (367 aa).

Residues 24–31 (AMSGGVDS) and leucine 50 contribute to the ATP site. Catalysis depends on cysteine 115, which acts as the Nucleophile. A disulfide bond links cysteine 115 and cysteine 211. Residue glycine 139 coordinates ATP. Residues 161 to 163 (KDQ) are interaction with tRNA. Cysteine 211 serves as the catalytic Cysteine persulfide intermediate.

Belongs to the MnmA/TRMU family.

Its subcellular location is the cytoplasm. The enzyme catalyses S-sulfanyl-L-cysteinyl-[protein] + uridine(34) in tRNA + AH2 + ATP = 2-thiouridine(34) in tRNA + L-cysteinyl-[protein] + A + AMP + diphosphate + H(+). Functionally, catalyzes the 2-thiolation of uridine at the wobble position (U34) of tRNA, leading to the formation of s(2)U34. This chain is tRNA-specific 2-thiouridylase MnmA, found in Ehrlichia canis (strain Jake).